The primary structure comprises 352 residues: Protein MGF 360-9L (352 aa).

The protein belongs to the asfivirus MGF 360 family. Interacts with host STAT1; this interaction mediates STAT1 degradation through apoptosis. Interacts with host STAT2; this interaction mediates STAT2 degradation through the proteasome.

It is found in the host cytoplasm. Its function is as follows. Plays a role in virus cell tropism, and may be required for efficient virus replication in macrophages. This Ornithodoros (relapsing fever ticks) protein is Protein MGF 360-9L.